The primary structure comprises 615 residues: Mitogen-activated protein kinase 18 (615 aa).

The Protein kinase domain occupies 25-316 (YRILEVIGKG…PAEALADPYF (292 aa)). Residues 31–39 (IGKGSYGVV) and lysine 54 contribute to the ATP site. The active-site Proton acceptor is aspartate 151. At threonine 187 the chain carries Phosphothreonine. Positions 187–189 (TDY) match the TXY motif. Tyrosine 189 carries the post-translational modification Phosphotyrosine. Threonine 192 is modified (phosphothreonine). Disordered regions lie at residues 414–483 (RSTV…ESSV) and 510–544 (NTMT…PPAA). Residues 415-426 (STVHSTVVHSTS) are compositionally biased toward low complexity. Residues 445–459 (NGASSAGHPSTSAYP) show a composition bias toward polar residues. Pro residues predominate over residues 464 to 473 (GPPPRVPPSG). 2 stretches are compositionally biased toward polar residues: residues 510–522 (NTMT…NIEA) and 532–544 (PVHQ…PPAA).

Belongs to the protein kinase superfamily. CMGC Ser/Thr protein kinase family. MAP kinase subfamily. In terms of assembly, interacts with PHS1. Binds to MAPKKK20. Dually phosphorylated on Thr-187 and Tyr-189, which activates the enzyme. Phosphorylated by MAPKKK20. As to expression, expressed in roots, seedlings, leaves, flower buds, flowers and siliques.

It localises to the nucleus. The protein localises to the cytoplasm. The enzyme catalyses L-seryl-[protein] + ATP = O-phospho-L-seryl-[protein] + ADP + H(+). It catalyses the reaction L-threonyl-[protein] + ATP = O-phospho-L-threonyl-[protein] + ADP + H(+). Its activity is regulated as follows. Activated by threonine and tyrosine phosphorylation. Inactivated by phosphatase PHS1. Functionally, mitogen-activated protein kinase (MAPK) that is specifically regulated by PHS1 and MAPKKK20 and mediates signaling that regulates cortical microtubule functions, maybe through regulation of microtubule dynamic instability. The protein is Mitogen-activated protein kinase 18 of Arabidopsis thaliana (Mouse-ear cress).